The following is a 281-amino-acid chain: Ribosomal protein L11 methyltransferase (281 aa).

Positions 133, 154, 175, and 216 each coordinate S-adenosyl-L-methionine.

The protein belongs to the methyltransferase superfamily. PrmA family.

The protein resides in the cytoplasm. The catalysed reaction is L-lysyl-[protein] + 3 S-adenosyl-L-methionine = N(6),N(6),N(6)-trimethyl-L-lysyl-[protein] + 3 S-adenosyl-L-homocysteine + 3 H(+). In terms of biological role, methylates ribosomal protein L11. This Campylobacter jejuni subsp. jejuni serotype O:23/36 (strain 81-176) protein is Ribosomal protein L11 methyltransferase.